A 544-amino-acid polypeptide reads, in one-letter code: Chaperonin GroEL 1 (544 aa).

ATP is bound by residues 29–32 (TLGP), Lys-50, 86–90 (DGTTT), Gly-414, and Asp-494.

This sequence belongs to the chaperonin (HSP60) family. Forms a cylinder of 14 subunits composed of two heptameric rings stacked back-to-back. Interacts with the co-chaperonin GroES.

It is found in the cytoplasm. It catalyses the reaction ATP + H2O + a folded polypeptide = ADP + phosphate + an unfolded polypeptide.. Its function is as follows. Together with its co-chaperonin GroES, plays an essential role in assisting protein folding. The GroEL-GroES system forms a nano-cage that allows encapsulation of the non-native substrate proteins and provides a physical environment optimized to promote and accelerate protein folding. The chain is Chaperonin GroEL 1 from Psychromonas ingrahamii (strain DSM 17664 / CCUG 51855 / 37).